The sequence spans 215 residues: Fibroblast growth factor 17 (215 aa).

Positions 1–22 (MYGINQRYLYISFHFFVVWCHA) are cleaved as a signal peptide. An N-linked (GlcNAc...) asparagine glycan is attached at Asn-137.

The protein belongs to the heparin-binding growth factors family.

The protein resides in the secreted. Its function is as follows. Involved in dorsal-ventral embryonic patterning, by promoting expression of bone morphogenetic protein (BMP) antagonists such as chd. Also involved in anterior-posterior neural patterning and in mesoderm induction. This chain is Fibroblast growth factor 17 (fgf17), found in Danio rerio (Zebrafish).